We begin with the raw amino-acid sequence, 248 residues long: 2,3-bisphosphoglycerate-dependent phosphoglycerate mutase (248 aa).

Residues 8–15 (RHGESEWN), 21–22 (TG), R60, 87–90 (ERHY), K98, 114–115 (RR), and 183–184 (GN) each bind substrate. H9 acts as the Tele-phosphohistidine intermediate in catalysis. E87 acts as the Proton donor/acceptor in catalysis.

The protein belongs to the phosphoglycerate mutase family. BPG-dependent PGAM subfamily.

The enzyme catalyses (2R)-2-phosphoglycerate = (2R)-3-phosphoglycerate. Its pathway is carbohydrate degradation; glycolysis; pyruvate from D-glyceraldehyde 3-phosphate: step 3/5. Its function is as follows. Catalyzes the interconversion of 2-phosphoglycerate and 3-phosphoglycerate. The polypeptide is 2,3-bisphosphoglycerate-dependent phosphoglycerate mutase (Borreliella afzelii (strain PKo) (Borrelia afzelii)).